Reading from the N-terminus, the 284-residue chain is Ribose-phosphate pyrophosphokinase 1 (284 aa).

Residue 34 to 36 (DGE) participates in ATP binding. The Mg(2+) site is built by histidine 126 and aspartate 163. Residue lysine 186 is part of the active site. D-ribose 5-phosphate is bound by residues arginine 188, aspartate 211, and 215–219 (STGGT).

It belongs to the ribose-phosphate pyrophosphokinase family. Class III (archaeal) subfamily. It depends on Mg(2+) as a cofactor.

The protein resides in the cytoplasm. It carries out the reaction D-ribose 5-phosphate + ATP = 5-phospho-alpha-D-ribose 1-diphosphate + AMP + H(+). Its pathway is metabolic intermediate biosynthesis; 5-phospho-alpha-D-ribose 1-diphosphate biosynthesis; 5-phospho-alpha-D-ribose 1-diphosphate from D-ribose 5-phosphate (route I): step 1/1. Its function is as follows. Involved in the biosynthesis of the central metabolite phospho-alpha-D-ribosyl-1-pyrophosphate (PRPP) via the transfer of pyrophosphoryl group from ATP to 1-hydroxyl of ribose-5-phosphate (Rib-5-P). The protein is Ribose-phosphate pyrophosphokinase 1 of Archaeoglobus fulgidus (strain ATCC 49558 / DSM 4304 / JCM 9628 / NBRC 100126 / VC-16).